Here is a 671-residue protein sequence, read N- to C-terminus: DNA ligase (671 aa).

NAD(+) contacts are provided by residues 35–39 (DQQYD), 84–85 (SL), and Glu113. Catalysis depends on Lys115, which acts as the N6-AMP-lysine intermediate. NAD(+)-binding residues include Arg136, Glu170, Lys285, and Lys309. Cys403, Cys406, Cys421, and Cys426 together coordinate Zn(2+). Residues 588-671 (TTQTIFTNKK…QIIENSQIKL (84 aa)) form the BRCT domain.

It belongs to the NAD-dependent DNA ligase family. LigA subfamily. The cofactor is Mg(2+). It depends on Mn(2+) as a cofactor.

The catalysed reaction is NAD(+) + (deoxyribonucleotide)n-3'-hydroxyl + 5'-phospho-(deoxyribonucleotide)m = (deoxyribonucleotide)n+m + AMP + beta-nicotinamide D-nucleotide.. Its function is as follows. DNA ligase that catalyzes the formation of phosphodiester linkages between 5'-phosphoryl and 3'-hydroxyl groups in double-stranded DNA using NAD as a coenzyme and as the energy source for the reaction. It is essential for DNA replication and repair of damaged DNA. This is DNA ligase from Onion yellows phytoplasma (strain OY-M).